Reading from the N-terminus, the 365-residue chain is tRNA N6-adenosine threonylcarbamoyltransferase (365 aa).

Fe cation is bound by residues histidine 122 and histidine 126. Substrate is bound by residues 147 to 151, aspartate 180, glycine 193, and asparagine 293; that span reads LVSGG. Aspartate 321 provides a ligand contact to Fe cation. The disordered stretch occupies residues 340–365; sequence PNEIDTAARPRWPLSERTPATPEHVS.

Belongs to the KAE1 / TsaD family. The cofactor is Fe(2+).

It localises to the cytoplasm. It catalyses the reaction L-threonylcarbamoyladenylate + adenosine(37) in tRNA = N(6)-L-threonylcarbamoyladenosine(37) in tRNA + AMP + H(+). In terms of biological role, required for the formation of a threonylcarbamoyl group on adenosine at position 37 (t(6)A37) in tRNAs that read codons beginning with adenine. Is involved in the transfer of the threonylcarbamoyl moiety of threonylcarbamoyl-AMP (TC-AMP) to the N6 group of A37, together with TsaE and TsaB. TsaD likely plays a direct catalytic role in this reaction. The polypeptide is tRNA N6-adenosine threonylcarbamoyltransferase (Gluconobacter oxydans (strain 621H) (Gluconobacter suboxydans)).